The following is a 212-amino-acid chain: Probable GTP-binding protein EngB (212 aa).

The 173-residue stretch at 38-210 (SLPEIAFVGK…KASLAKCIKF (173 aa)) folds into the EngB-type G domain. Residues 46-53 (GKSNVGKS), 73-77 (GRTRQ), 91-94 (DLPG), 158-161 (TKSD), and 189-191 (VSN) contribute to the GTP site. The Mg(2+) site is built by Ser53 and Thr75.

This sequence belongs to the TRAFAC class TrmE-Era-EngA-EngB-Septin-like GTPase superfamily. EngB GTPase family. The cofactor is Mg(2+).

Functionally, necessary for normal cell division and for the maintenance of normal septation. The sequence is that of Probable GTP-binding protein EngB from Rickettsia rickettsii (strain Sheila Smith).